Here is a 323-residue protein sequence, read N- to C-terminus: Transcription initiation factor IIB 7 (323 aa).

Over residues 1 to 16 the composition is skewed to basic and acidic residues; sequence MTRSTRQRERETAAKQ. The interval 1 to 35 is disordered; it reads MTRSTRQRERETAAKQEEEEDSEEGVRECPECGSD. The TFIIB-type zinc finger occupies 24–56; it reads EGVRECPECGSDNLVKSSDRAELVCNDCGLVVE. 4 residues coordinate Zn(2+): Cys-29, Cys-32, Cys-48, and Cys-51. 2 consecutive repeat copies span residues 142-225 and 236-317.

It belongs to the TFIIB family.

Stabilizes TBP binding to an archaeal box-A promoter. Also responsible for recruiting RNA polymerase II to the pre-initiation complex (DNA-TBP-TFIIB). The sequence is that of Transcription initiation factor IIB 7 from Halobacterium salinarum (strain ATCC 700922 / JCM 11081 / NRC-1) (Halobacterium halobium).